A 254-amino-acid polypeptide reads, in one-letter code: Zinc import ATP-binding protein ZnuC (254 aa).

Residues 5–221 enclose the ABC transporter domain; the sequence is ICAADLSVSH…PAYRALFGSE (217 aa). 38–45 is an ATP binding site; the sequence is GPNGSGKS. Positions 234 to 245 are enriched in basic and acidic residues; it reads DHDHDHVAEGHR. The tract at residues 234-254 is disordered; that stretch reads DHDHDHVAEGHRHGPACAHPH.

It belongs to the ABC transporter superfamily. Zinc importer (TC 3.A.1.15.5) family. As to quaternary structure, the complex is composed of two ATP-binding proteins (ZnuC), two transmembrane proteins (ZnuB) and a solute-binding protein (ZnuA).

It is found in the cell inner membrane. It catalyses the reaction Zn(2+)(out) + ATP(in) + H2O(in) = Zn(2+)(in) + ADP(in) + phosphate(in) + H(+)(in). Functionally, part of the ABC transporter complex ZnuABC involved in zinc import. Responsible for energy coupling to the transport system. This is Zinc import ATP-binding protein ZnuC from Paracoccus denitrificans (strain Pd 1222).